Here is a 633-residue protein sequence, read N- to C-terminus: Pesticidal crystal protein Cry2Ad (633 aa).

It belongs to the delta endotoxin family.

Its function is as follows. Promotes colloidosmotic lysis by binding to the midgut epithelial cells of insects. The protein is Pesticidal crystal protein Cry2Ad (cry2Ad) of Bacillus thuringiensis.